The chain runs to 142 residues: DTPFECPSDWSTHRQYCYKFFQQKESWDDRSEYDAERFCSEQAKGGHLVSIESDEEADFVAQLVAPNIGKSKYYVWIGLRIENKKQQCSSKWSDYSSVSYENLVRGNVKKCFALEKKQGFRKWVNIDCVEGNPFVCKFIRPR.

Cystine bridges form between Cys6–Cys17, Cys39–Cys136, and Cys111–Cys128. A C-type lectin domain is found at 13–137 (HRQYCYKFFQ…CVEGNPFVCK (125 aa)).

The protein belongs to the snaclec family. As to quaternary structure, heterodimer of subunits alpha and beta; disulfide-linked. Expressed by the venom gland.

The protein localises to the secreted. Its function is as follows. Binds to platelet GPIb (subunit alpha) (GP1BA) and functions as a receptor blocker for vWF binding to GPIb. The platelet GPIb-binding site resides on the GPIB-BP subunit beta and not on the alpha subunit. At a final concentration of 104 nM totally abolishes vWF-dependent shear-induced platelet aggregation (SIPA) at a high shear stress, but had no effect on SIPA at a low shear stress. The chain is Snaclec GPIB-binding protein subunit alpha from Bothrops jararaca (Jararaca).